A 180-amino-acid chain; its full sequence is Adenine phosphoribosyltransferase (180 aa).

Belongs to the purine/pyrimidine phosphoribosyltransferase family. In terms of assembly, homodimer.

It localises to the cytoplasm. It catalyses the reaction AMP + diphosphate = 5-phospho-alpha-D-ribose 1-diphosphate + adenine. It participates in purine metabolism; AMP biosynthesis via salvage pathway; AMP from adenine: step 1/1. Catalyzes a salvage reaction resulting in the formation of AMP, that is energically less costly than de novo synthesis. In Sinorhizobium medicae (strain WSM419) (Ensifer medicae), this protein is Adenine phosphoribosyltransferase.